Here is a 179-residue protein sequence, read N- to C-terminus: Protein Syd (179 aa).

Belongs to the Syd family.

Its subcellular location is the cell inner membrane. Interacts with the SecY protein in vivo. May bind preferentially to an uncomplexed state of SecY, thus functioning either as a chelating agent for excess SecY in the cell or as a regulatory factor that negatively controls the translocase function. The polypeptide is Protein Syd (Pseudoalteromonas translucida (strain TAC 125)).